The primary structure comprises 164 residues: Putative pre-16S rRNA nuclease (164 aa).

It belongs to the YqgF nuclease family.

The protein resides in the cytoplasm. Could be a nuclease involved in processing of the 5'-end of pre-16S rRNA. The protein is Putative pre-16S rRNA nuclease of Rhizobium etli (strain CIAT 652).